Reading from the N-terminus, the 305-residue chain is Acyl transferase (305 aa).

Active-site charge relay system residues include Ser116, Asp213, and His243.

The protein belongs to the LuxD family.

It functions in the pathway lipid metabolism; fatty acid reduction for biolumincescence. Its function is as follows. Acyl transferase is part of the fatty acid reductase system required for aldehyde biosynthesis; it produces fatty acids for the luminescent reaction. This chain is Acyl transferase, found in Photobacterium leiognathi.